Consider the following 823-residue polypeptide: Protein Jade-3 (823 aa).

A disordered region spans residues Met-1 to Ser-40. Residues Ser-8–Ser-20 show a composition bias toward low complexity. An N6-acetyllysine mark is found at Lys-30, Lys-32, and Lys-35. The PHD-type 1 zinc-finger motif lies at Asp-200 to Gly-250. Residues Tyr-252–Val-286 form a C2HC pre-PHD-type zinc finger. The PHD-type 2 zinc-finger motif lies at Leu-310–Ser-366. 2 disordered regions span residues Leu-543–Pro-585 and Lys-601–Tyr-631. The segment covering Thr-549–His-562 has biased composition (basic and acidic residues). 2 positions are modified to phosphoserine: Ser-566 and Ser-578. Position 601 is an N6-acetyllysine (Lys-601). Ser-608 is modified (phosphoserine). At Lys-638 the chain carries N6-acetyllysine. The tract at residues Ser-651–Asn-676 is disordered. Lys-735 is subject to N6-acetyllysine. The interval Thr-756 to Arg-823 is disordered. 2 positions are modified to phosphoserine: Ser-774 and Ser-776. Over residues Glu-781–Gly-809 the composition is skewed to basic and acidic residues.

Belongs to the JADE family. As to quaternary structure, component of the HBO1 complex composed at least of ING4 or ING5, MYST2/HBO1, MEAF6, and one of JADE1, JADE2 and JADE3.

Scaffold subunit of some HBO1 complexes, which have a histone H4 acetyltransferase activity. This is Protein Jade-3 (Jade3) from Mus musculus (Mouse).